We begin with the raw amino-acid sequence, 268 residues long: Tryptophan synthase alpha chain (268 aa).

Catalysis depends on proton acceptor residues E49 and D60.

It belongs to the TrpA family. In terms of assembly, tetramer of two alpha and two beta chains.

The catalysed reaction is (1S,2R)-1-C-(indol-3-yl)glycerol 3-phosphate + L-serine = D-glyceraldehyde 3-phosphate + L-tryptophan + H2O. It participates in amino-acid biosynthesis; L-tryptophan biosynthesis; L-tryptophan from chorismate: step 5/5. The alpha subunit is responsible for the aldol cleavage of indoleglycerol phosphate to indole and glyceraldehyde 3-phosphate. This Escherichia coli O17:K52:H18 (strain UMN026 / ExPEC) protein is Tryptophan synthase alpha chain.